Here is a 569-residue protein sequence, read N- to C-terminus: Sulfite reductase [NADPH] hemoprotein beta-component (569 aa).

Residues Cys433, Cys439, Cys478, and Cys482 each coordinate [4Fe-4S] cluster. Position 482 (Cys482) interacts with siroheme.

The protein belongs to the nitrite and sulfite reductase 4Fe-4S domain family. Alpha(8)-beta(8). The alpha component is a flavoprotein, the beta component is a hemoprotein. Requires siroheme as cofactor. It depends on [4Fe-4S] cluster as a cofactor.

It catalyses the reaction hydrogen sulfide + 3 NADP(+) + 3 H2O = sulfite + 3 NADPH + 4 H(+). Its pathway is sulfur metabolism; hydrogen sulfide biosynthesis; hydrogen sulfide from sulfite (NADPH route): step 1/1. Functionally, component of the sulfite reductase complex that catalyzes the 6-electron reduction of sulfite to sulfide. This is one of several activities required for the biosynthesis of L-cysteine from sulfate. This chain is Sulfite reductase [NADPH] hemoprotein beta-component, found in Pseudoalteromonas atlantica (strain T6c / ATCC BAA-1087).